We begin with the raw amino-acid sequence, 521 residues long: Tetratricopeptide repeat and J domain-containing co-chaperone DNJ1 (521 aa).

The N-terminal stretch at 1–21 is a signal peptide; sequence MHLNLAGLAVAATAFLATASA. TPR repeat units follow at residues 33–66, 67–100, 102–134, 176–209, 211–244, 315–348, and 349–382; these read VSNLLTKAQTHLSRGETNEALVYYDAAIARDPTN, YLSLFKRATAYLSLGRTSQATEDFNKVLSLKPGF, GAHLQLARLRAKAGDWDAAKAQYGLAGKAPKSA, PHLRELRAHCRFELGDVELALSDLQHVLHMKPGD, SPHIVISATSFYALGDLENGIGQVKKCLQSDPDS, LENLIEMTCQAYTESSHKEAAKYCDESLQLNPDS, and FWGLLHKGKAQLKSELYDAAIATLEKAAEIRPDQ. The J domain maps to 404-473; that stretch reads DYYKVLGVEN…ELRARFDRGD (70 aa). A compositionally biased stretch (basic and acidic residues) spans 464–474; that stretch reads ELRARFDRGDD. The disordered stretch occupies residues 464-521; the sequence is ELRARFDRGDDPNSQERPNPFQGQGNPFGGGHPFMFQQGGGGGGPNIKFQFGGQPFGF. Gly residues predominate over residues 489–508; the sequence is NPFGGGHPFMFQQGGGGGGP. Over residues 509–521 the composition is skewed to low complexity; that stretch reads NIKFQFGGQPFGF.

It localises to the endoplasmic reticulum lumen. Functionally, endoplasmic reticulum co-chaperone required for the of virulence factors such as PG1, the major endopolygalacturonase produced during the infection of tomato plants. The polypeptide is Tetratricopeptide repeat and J domain-containing co-chaperone DNJ1 (Fusarium oxysporum f. sp. lycopersici (strain 4287 / CBS 123668 / FGSC 9935 / NRRL 34936) (Fusarium vascular wilt of tomato)).